Here is a 199-residue protein sequence, read N- to C-terminus: Holliday junction branch migration complex subunit RuvA (199 aa).

The segment at 1 to 63 (MIGCLIGEVF…EDAQQLYGFS (63 aa)) is domain I. The domain II stretch occupies residues 64–142 (DAQEKTIFRT…TLAQGTSSAA (79 aa)). The tract at residues 143–150 (ALPQIQFV) is flexible linker. The domain III stretch occupies residues 150–199 (VSNSPVAEAEAALQSLGYKPLEAQKAVAAVKADYTESADIIRAALKSMMK).

The protein belongs to the RuvA family. Homotetramer. Forms an RuvA(8)-RuvB(12)-Holliday junction (HJ) complex. HJ DNA is sandwiched between 2 RuvA tetramers; dsDNA enters through RuvA and exits via RuvB. An RuvB hexamer assembles on each DNA strand where it exits the tetramer. Each RuvB hexamer is contacted by two RuvA subunits (via domain III) on 2 adjacent RuvB subunits; this complex drives branch migration. In the full resolvosome a probable DNA-RuvA(4)-RuvB(12)-RuvC(2) complex forms which resolves the HJ.

The protein localises to the cytoplasm. Functionally, the RuvA-RuvB-RuvC complex processes Holliday junction (HJ) DNA during genetic recombination and DNA repair, while the RuvA-RuvB complex plays an important role in the rescue of blocked DNA replication forks via replication fork reversal (RFR). RuvA specifically binds to HJ cruciform DNA, conferring on it an open structure. The RuvB hexamer acts as an ATP-dependent pump, pulling dsDNA into and through the RuvAB complex. HJ branch migration allows RuvC to scan DNA until it finds its consensus sequence, where it cleaves and resolves the cruciform DNA. This chain is Holliday junction branch migration complex subunit RuvA, found in Acinetobacter baumannii (strain SDF).